A 316-amino-acid chain; its full sequence is 4-hydroxy-3-methylbut-2-enyl diphosphate reductase (316 aa).

Cys12 is a binding site for [4Fe-4S] cluster. 2 residues coordinate (2E)-4-hydroxy-3-methylbut-2-enyl diphosphate: His41 and His74. Residues His41 and His74 each coordinate dimethylallyl diphosphate. Isopentenyl diphosphate-binding residues include His41 and His74. Cys96 contacts [4Fe-4S] cluster. His124 is a binding site for (2E)-4-hydroxy-3-methylbut-2-enyl diphosphate. His124 contributes to the dimethylallyl diphosphate binding site. His124 provides a ligand contact to isopentenyl diphosphate. The active-site Proton donor is the Glu126. (2E)-4-hydroxy-3-methylbut-2-enyl diphosphate is bound at residue Thr169. Cys199 provides a ligand contact to [4Fe-4S] cluster. The (2E)-4-hydroxy-3-methylbut-2-enyl diphosphate site is built by Ser227, Ser228, Asn229, and Ser271. 4 residues coordinate dimethylallyl diphosphate: Ser227, Ser228, Asn229, and Ser271. Residues Ser227, Ser228, Asn229, and Ser271 each coordinate isopentenyl diphosphate.

This sequence belongs to the IspH family. [4Fe-4S] cluster is required as a cofactor.

It catalyses the reaction isopentenyl diphosphate + 2 oxidized [2Fe-2S]-[ferredoxin] + H2O = (2E)-4-hydroxy-3-methylbut-2-enyl diphosphate + 2 reduced [2Fe-2S]-[ferredoxin] + 2 H(+). The enzyme catalyses dimethylallyl diphosphate + 2 oxidized [2Fe-2S]-[ferredoxin] + H2O = (2E)-4-hydroxy-3-methylbut-2-enyl diphosphate + 2 reduced [2Fe-2S]-[ferredoxin] + 2 H(+). Its pathway is isoprenoid biosynthesis; dimethylallyl diphosphate biosynthesis; dimethylallyl diphosphate from (2E)-4-hydroxy-3-methylbutenyl diphosphate: step 1/1. It participates in isoprenoid biosynthesis; isopentenyl diphosphate biosynthesis via DXP pathway; isopentenyl diphosphate from 1-deoxy-D-xylulose 5-phosphate: step 6/6. Functionally, catalyzes the conversion of 1-hydroxy-2-methyl-2-(E)-butenyl 4-diphosphate (HMBPP) into a mixture of isopentenyl diphosphate (IPP) and dimethylallyl diphosphate (DMAPP). Acts in the terminal step of the DOXP/MEP pathway for isoprenoid precursor biosynthesis. This Xanthomonas campestris pv. campestris (strain ATCC 33913 / DSM 3586 / NCPPB 528 / LMG 568 / P 25) protein is 4-hydroxy-3-methylbut-2-enyl diphosphate reductase.